Consider the following 100-residue polypeptide: Urease subunit gamma (100 aa).

Belongs to the urease gamma subunit family. In terms of assembly, heterotrimer of UreA (gamma), UreB (beta) and UreC (alpha) subunits. Three heterotrimers associate to form the active enzyme.

Its subcellular location is the cytoplasm. It catalyses the reaction urea + 2 H2O + H(+) = hydrogencarbonate + 2 NH4(+). It participates in nitrogen metabolism; urea degradation; CO(2) and NH(3) from urea (urease route): step 1/1. This Prochlorococcus marinus (strain NATL1A) protein is Urease subunit gamma.